Consider the following 283-residue polypeptide: ATP phosphoribosyltransferase (283 aa).

It belongs to the ATP phosphoribosyltransferase family. Long subfamily. Mg(2+) is required as a cofactor.

The protein resides in the cytoplasm. The catalysed reaction is 1-(5-phospho-beta-D-ribosyl)-ATP + diphosphate = 5-phospho-alpha-D-ribose 1-diphosphate + ATP. It participates in amino-acid biosynthesis; L-histidine biosynthesis; L-histidine from 5-phospho-alpha-D-ribose 1-diphosphate: step 1/9. Its activity is regulated as follows. Feedback inhibited by histidine. Catalyzes the condensation of ATP and 5-phosphoribose 1-diphosphate to form N'-(5'-phosphoribosyl)-ATP (PR-ATP). Has a crucial role in the pathway because the rate of histidine biosynthesis seems to be controlled primarily by regulation of HisG enzymatic activity. The sequence is that of ATP phosphoribosyltransferase from Rhodococcus jostii (strain RHA1).